The chain runs to 1774 residues: U3 small nucleolar RNA-associated protein 10 (1774 aa).

The segment at 1206–1226 (YDKHSSAGSNDEEAGSESEAE) is disordered. Residues 1215–1226 (NDEEAGSESEAE) show a composition bias toward acidic residues. The stretch at 1734–1772 (LVPIIAELLEDEDEEVEYEVRSGLVKVVESVMGEPFDRY) is one HEAT repeat.

This sequence belongs to the HEATR1/UTP10 family. Component of the ribosomal small subunit (SSU) processome.

It localises to the nucleus. Its subcellular location is the nucleolus. Involved in nucleolar processing of pre-18S ribosomal RNA. Involved in ribosome biosynthesis. In Kluyveromyces lactis (strain ATCC 8585 / CBS 2359 / DSM 70799 / NBRC 1267 / NRRL Y-1140 / WM37) (Yeast), this protein is U3 small nucleolar RNA-associated protein 10.